The chain runs to 752 residues: Photosystem I P700 chlorophyll a apoprotein A1 (752 aa).

A run of 8 helical transmembrane segments spans residues 73 to 96 (IFSAHFGQLSVIFLWISGMHFHGA), 159 to 182 (LYWIAIGGLAMSAIMLFAGWFHYH), 198 to 222 (MNHHLAGLLGLGCLSWSGHQIHVAL), 294 to 312 (IAHHHLALAVLFIFAGHMY), 349 to 372 (WHAQLAINLAMMGSLSIIVAHHMY), 388 to 414 (LSLFTHHMWIGGFCVTGGAAHAAIFMV), 436 to 458 (SIIAHLNWVCIFLGCHAFGFYIH), and 533 to 551 (FMVHHIHAFTIHVTVLILL). [4Fe-4S] cluster contacts are provided by cysteine 575 and cysteine 584. 2 helical membrane passes run 591 to 612 (HVFLGLFWMYNSISVVIFHFSW) and 666 to 688 (ASAYGLIFLGAHFIWAFSLMFLF). Chlorophyll a' is bound at residue histidine 677. Chlorophyll a contacts are provided by methionine 685 and tyrosine 693. A phylloquinone-binding site is contributed by tryptophan 694. The helical transmembrane segment at 726–746 (AVGLAHYLLGGIGTTWAFFLA) threads the bilayer.

It belongs to the PsaA/PsaB family. As to quaternary structure, the PsaA/B heterodimer binds the P700 chlorophyll special pair and subsequent electron acceptors. PSI consists of a core antenna complex that captures photons, and an electron transfer chain that converts photonic excitation into a charge separation. The eukaryotic PSI reaction center is composed of at least 11 subunits. Requires P700 is a chlorophyll a/chlorophyll a' dimer, A0 is one or more chlorophyll a, A1 is one or both phylloquinones and FX is a shared 4Fe-4S iron-sulfur center. as cofactor.

It is found in the plastid. It localises to the chloroplast thylakoid membrane. It catalyses the reaction reduced [plastocyanin] + hnu + oxidized [2Fe-2S]-[ferredoxin] = oxidized [plastocyanin] + reduced [2Fe-2S]-[ferredoxin]. Functionally, psaA and PsaB bind P700, the primary electron donor of photosystem I (PSI), as well as the electron acceptors A0, A1 and FX. PSI is a plastocyanin/cytochrome c6-ferredoxin oxidoreductase, converting photonic excitation into a charge separation, which transfers an electron from the donor P700 chlorophyll pair to the spectroscopically characterized acceptors A0, A1, FX, FA and FB in turn. Oxidized P700 is reduced on the lumenal side of the thylakoid membrane by plastocyanin or cytochrome c6. The polypeptide is Photosystem I P700 chlorophyll a apoprotein A1 (Phaeodactylum tricornutum (strain CCAP 1055/1)).